The following is a 212-amino-acid chain: GTP cyclohydrolase 1 (212 aa).

Zn(2+) is bound by residues Cys-103, His-106, and Cys-174.

The protein belongs to the GTP cyclohydrolase I family. As to quaternary structure, toroid-shaped homodecamer, composed of two pentamers of five dimers.

The enzyme catalyses GTP + H2O = 7,8-dihydroneopterin 3'-triphosphate + formate + H(+). Its pathway is cofactor biosynthesis; 7,8-dihydroneopterin triphosphate biosynthesis; 7,8-dihydroneopterin triphosphate from GTP: step 1/1. The protein is GTP cyclohydrolase 1 of Caulobacter vibrioides (strain ATCC 19089 / CIP 103742 / CB 15) (Caulobacter crescentus).